The following is a 195-amino-acid chain: MKLLHLDASVLGDNSVSRQLSAAVVARFTGQIDGLQVDYRDLDANPVPHLRSSSLARTDAAEATDAEQVMQQFLDADIVVIGAPMYNFSIPSTLKAWIDRVAVAGRTFKYTENGPVGLASGKRVIIASSRGGIYTDSPADFQEPFLRQVFAFMGINEVEFVRAEGIAYSPQHREDAIAGALAALPSHEVVEAVAA.

FMN-binding positions include Ser9, 15–17, 85–88, and 129–132; these read SVS, MYNF, and SRGG.

This sequence belongs to the azoreductase type 1 family. As to quaternary structure, homodimer. FMN is required as a cofactor.

The enzyme catalyses 2 a quinone + NADH + H(+) = 2 a 1,4-benzosemiquinone + NAD(+). It carries out the reaction N,N-dimethyl-1,4-phenylenediamine + anthranilate + 2 NAD(+) = 2-(4-dimethylaminophenyl)diazenylbenzoate + 2 NADH + 2 H(+). In terms of biological role, quinone reductase that provides resistance to thiol-specific stress caused by electrophilic quinones. Also exhibits azoreductase activity. Catalyzes the reductive cleavage of the azo bond in aromatic azo compounds to the corresponding amines. This chain is FMN-dependent NADH:quinone oxidoreductase, found in Stenotrophomonas maltophilia (strain K279a).